The following is a 104-amino-acid chain: Large ribosomal subunit protein bL21 (104 aa).

Residues 81 to 90 (QGYRRHHGHR) show a composition bias toward basic residues. Residues 81 to 104 (QGYRRHHGHRQPYTQVKITGISAG) form a disordered region.

This sequence belongs to the bacterial ribosomal protein bL21 family. Part of the 50S ribosomal subunit. Contacts protein L20.

This protein binds to 23S rRNA in the presence of protein L20. This Halorhodospira halophila (strain DSM 244 / SL1) (Ectothiorhodospira halophila (strain DSM 244 / SL1)) protein is Large ribosomal subunit protein bL21.